A 217-amino-acid polypeptide reads, in one-letter code: Probable transaldolase (217 aa).

Residue Lys83 is the Schiff-base intermediate with substrate of the active site.

The protein belongs to the transaldolase family. Type 3B subfamily.

It localises to the cytoplasm. It catalyses the reaction D-sedoheptulose 7-phosphate + D-glyceraldehyde 3-phosphate = D-erythrose 4-phosphate + beta-D-fructose 6-phosphate. It functions in the pathway carbohydrate degradation; pentose phosphate pathway; D-glyceraldehyde 3-phosphate and beta-D-fructose 6-phosphate from D-ribose 5-phosphate and D-xylulose 5-phosphate (non-oxidative stage): step 2/3. In terms of biological role, transaldolase is important for the balance of metabolites in the pentose-phosphate pathway. In Ruegeria pomeroyi (strain ATCC 700808 / DSM 15171 / DSS-3) (Silicibacter pomeroyi), this protein is Probable transaldolase.